The sequence spans 321 residues: Necdin (321 aa).

Positions 1 to 96 (MSEQSKDLSD…QPGPAPPAPA (96 aa)) are disordered. Over residues 20-35 (SEVHSSPGVSEGVPPS) the composition is skewed to low complexity. One can recognise an MAGE domain in the interval 98–297 (LVQKAHELMW…QAWPSRYREA (200 aa)).

As to quaternary structure, binds to the transactivation domains of E2F1 and p53. Binds also SV40 large T antigen and adenovirus E1A. Interacts with nucleobindin 1 and 2. In terms of tissue distribution, almost ubiquitous. Detected in fetal brain, lung, liver and kidney; in adult heart, brain, placenta, lung, liver, skeletal muscle, kidney, pancreas, spleen, thymus, prostate, testis, ovary, small intestine and colon. Not detected in peripheral blood leukocytes. In brain, restricted to post-mitotic neurons.

Its subcellular location is the perikaryon. The protein localises to the nucleus. In terms of biological role, growth suppressor that facilitates the entry of the cell into cell cycle arrest. Functionally similar to the retinoblastoma protein it binds to and represses the activity of cell-cycle-promoting proteins such as SV40 large T antigen, adenovirus E1A, and the transcription factor E2F. Necdin also interacts with p53 and works in an additive manner to inhibit cell growth. Also functions as a transcription factor and directly binds to specific guanosine-rich DNA sequences. This is Necdin (NDN) from Homo sapiens (Human).